Consider the following 81-residue polypeptide: MCSVHYNHSLAAMSGSDIMAYSLSLEQKTAFAFVGMLLVFLGLLIVRCFRILLDPYSSMPSSSWGDGLEGLEKGTFEYALT.

Residues 29 to 49 (TAFAFVGMLLVFLGLLIVRCF) form a helical membrane-spanning segment.

It belongs to the cortexin family.

The protein localises to the membrane. The protein is Cortexin-2 (ctxn2) of Danio rerio (Zebrafish).